Consider the following 298-residue polypeptide: Tyrosine recombinase XerC (298 aa).

The region spanning 1 to 84 (MNHIQEAFLN…TLRTFYEYWM (84 aa)) is the Core-binding (CB) domain. Residues 105-286 (YLPQFFYEEE…SNQQLRKVYL (182 aa)) enclose the Tyr recombinase domain. Active-site residues include Arg145, Lys169, His238, Arg241, and His264. The active-site O-(3'-phospho-DNA)-tyrosine intermediate is Tyr273.

It belongs to the 'phage' integrase family. XerC subfamily. As to quaternary structure, forms a cyclic heterotetrameric complex composed of two molecules of XerC and two molecules of XerD.

It is found in the cytoplasm. Functionally, site-specific tyrosine recombinase, which acts by catalyzing the cutting and rejoining of the recombining DNA molecules. The XerC-XerD complex is essential to convert dimers of the bacterial chromosome into monomers to permit their segregation at cell division. It also contributes to the segregational stability of plasmids. The protein is Tyrosine recombinase XerC of Staphylococcus aureus (strain bovine RF122 / ET3-1).